The sequence spans 271 residues: N-acetyltransferase ECO1 (271 aa).

The segment at 26–50 (VKCPKCSITYSTNSPSDLVQHKRYH) adopts a CCHH-type zinc-finger fold. One can recognise an N-acetyltransferase domain in the interval 109–271 (VMISPKKANE…SGKLLIPCYI (163 aa)).

This sequence belongs to the acetyltransferase family. ECO subfamily.

Its subcellular location is the nucleus. In terms of biological role, probable acetyltransferase required for the establishment of sister chromatid cohesion and couple the processes of cohesion and DNA replication to ensure that only sister chromatids become paired together. In contrast to the structural cohesins, the deposition and establishment factors are required only during S phase. Acts by acetylating the cohesin complex component SMC3. The polypeptide is N-acetyltransferase ECO1 (ECO1) (Kluyveromyces lactis (strain ATCC 8585 / CBS 2359 / DSM 70799 / NBRC 1267 / NRRL Y-1140 / WM37) (Yeast)).